We begin with the raw amino-acid sequence, 93 residues long: Small ribosomal subunit protein uS19 (93 aa).

It belongs to the universal ribosomal protein uS19 family.

Protein S19 forms a complex with S13 that binds strongly to the 16S ribosomal RNA. In Synechococcus sp. (strain JA-2-3B'a(2-13)) (Cyanobacteria bacterium Yellowstone B-Prime), this protein is Small ribosomal subunit protein uS19.